The following is a 1316-amino-acid chain: DNA-directed RNA polymerase subunit beta' (1316 aa).

The Zn(2+) site is built by cysteine 60, cysteine 62, cysteine 75, and cysteine 78. Positions 535, 537, and 539 each coordinate Mg(2+). Cysteine 891, cysteine 968, cysteine 975, and cysteine 978 together coordinate Zn(2+).

It belongs to the RNA polymerase beta' chain family. As to quaternary structure, the RNAP catalytic core consists of 2 alpha, 1 beta, 1 beta' and 1 omega subunit. When a sigma factor is associated with the core the holoenzyme is formed, which can initiate transcription. Mg(2+) serves as cofactor. It depends on Zn(2+) as a cofactor.

It carries out the reaction RNA(n) + a ribonucleoside 5'-triphosphate = RNA(n+1) + diphosphate. Functionally, DNA-dependent RNA polymerase catalyzes the transcription of DNA into RNA using the four ribonucleoside triphosphates as substrates. This chain is DNA-directed RNA polymerase subunit beta', found in Mycobacterium marinum (strain ATCC BAA-535 / M).